Reading from the N-terminus, the 463-residue chain is HEPACAM family member 2 (463 aa).

Residues 1–32 (MGQDAFMELLRSMVGLSLCKIHLLLIAGSCLG) form the signal peptide. 3 N-linked (GlcNAc...) asparagine glycosylation sites follow: Asn86, Asn130, and Asn166. Ig-like C2-type domains lie at 150–234 (PMVQ…SDII) and 236–332 (PTIY…TRFT). 2 disulfides stabilise this stretch: Cys171/Cys220 and Cys271/Cys316. Asn321 is a glycosylation site (N-linked (GlcNAc...) asparagine). A helical membrane pass occupies residues 353-373 (LASITGISLFLIISMCLLFLW). The Cytoplasmic portion of the chain corresponds to 374-463 (KKYQPYKAIR…IPEQQQENTE (90 aa)).

Post-translationally, poly-ADP-ribosylated (PARsylated) by tankyrase TNKS during late G2 and prophase, leading to translocation to mitotic centrosomes. N-glycosylated.

It localises to the golgi apparatus membrane. The protein resides in the cytoplasm. It is found in the cytoskeleton. Its subcellular location is the spindle. The protein localises to the microtubule organizing center. It localises to the centrosome. The protein resides in the midbody. Functionally, required during prometaphase for centrosome maturation. Following poly-ADP-ribosylation (PARsylation) by TNKS, translocates from the Golgi apparatus to mitotic centrosomes and plays a key role in the formation of robust microtubules for prompt movement of chromosomes: anchors AKAP9/CG-NAP, a scaffold protein of the gamma-tubulin ring complex and promotes centrosome maturation. The polypeptide is HEPACAM family member 2 (Hepacam2) (Mus musculus (Mouse)).